A 504-amino-acid chain; its full sequence is Cholesterol 7-alpha-monooxygenase (504 aa).

Cys-444 provides a ligand contact to heme.

The protein belongs to the cytochrome P450 family. The cofactor is heme.

It is found in the endoplasmic reticulum membrane. Its subcellular location is the microsome membrane. The enzyme catalyses cholesterol + reduced [NADPH--hemoprotein reductase] + O2 = 7alpha-hydroxycholesterol + oxidized [NADPH--hemoprotein reductase] + H2O + H(+). The protein operates within lipid metabolism; bile acid biosynthesis. Functionally, catalyzes a rate-limiting step in cholesterol catabolism and bile acid biosynthesis by introducing a hydrophilic moiety at position 7 of cholesterol. Important for cholesterol homeostasis. The polypeptide is Cholesterol 7-alpha-monooxygenase (CYP7A1) (Cricetulus griseus (Chinese hamster)).